Consider the following 196-residue polypeptide: MHRENYFSKIAFCLLGVLFLSCITSVQTVSGDAASHEERMNNYRKRVGRLFMEQKAAQPDAVKLPSGLVFQRIARGSGKRAPAIDDKCEVHYTGRLRDGTVFDSSRERGKPTTFRPNEVIKGWTEALQLMREGDRWRLFIPYDLAYGVTGGGGMIPPYSPLEFDVELISIKDGGKGRTAEEVDEILRKAEEDREDM.

A signal peptide spans 1–29 (MHRENYFSKIAFCLLGVLFLSCITSVQTV). A PPIase FKBP-type domain is found at 85–171 (DDKCEVHYTG…EFDVELISIK (87 aa)).

The protein belongs to the FKBP-type PPIase family.

It is found in the secreted. The protein resides in the extracellular space. It carries out the reaction [protein]-peptidylproline (omega=180) = [protein]-peptidylproline (omega=0). Its activity is regulated as follows. Strongly inhibited by FK506 and L-685,818. In terms of biological role, essential virulence factor associated with macrophage infectivity. Exhibits PPIase activity. The chain is Macrophage infectivity potentiator (MIP) from Trypanosoma cruzi.